Consider the following 350-residue polypeptide: Methionine aminopeptidase 1D, chloroplastic/mitochondrial (350 aa).

The transit peptide at 1 to 49 directs the protein to the chloroplast and mitochondrion; sequence MAGVKSLQPRLISSFLGNNSIRSTQPLIHLFRFDLGRRHVSMQLSRTFS. N-acetylglycine is present on Gly-50. The disordered stretch occupies residues 71-90; that stretch reads RLRPGNVSPRRPVPGHITKP. Position 180 (His-180) interacts with substrate. Positions 197, 208, and 271 each coordinate a divalent metal cation. Position 278 (His-278) interacts with substrate. A divalent metal cation contacts are provided by Glu-303 and Glu-334.

It belongs to the peptidase M24A family. Methionine aminopeptidase type 1 subfamily. Co(2+) is required as a cofactor. Zn(2+) serves as cofactor. It depends on Mn(2+) as a cofactor. The cofactor is Fe(2+). Ubiquitous. Preferentially expressed in green tissues.

It localises to the plastid. The protein localises to the chloroplast. The protein resides in the mitochondrion. The catalysed reaction is Release of N-terminal amino acids, preferentially methionine, from peptides and arylamides.. In terms of biological role, removes the N-terminal methionine from nascent proteins. The N-terminal methionine is often cleaved when the second residue in the primary sequence is small and uncharged (Met-Ala-, Cys, Gly, Pro, Ser, Thr, or Val). This Arabidopsis thaliana (Mouse-ear cress) protein is Methionine aminopeptidase 1D, chloroplastic/mitochondrial (MAP1D).